The sequence spans 641 residues: DNA mismatch repair protein MutL (641 aa).

The segment at 345-445 (PAAVAPPAPA…GDTSLGDTSP (101 aa)) is disordered. Residues 419 to 429 (PRTEPATRTGE) are compositionally biased toward basic and acidic residues. Residues 432–442 (GISSGDTSLGD) show a composition bias toward polar residues.

Belongs to the DNA mismatch repair MutL/HexB family.

Its function is as follows. This protein is involved in the repair of mismatches in DNA. It is required for dam-dependent methyl-directed DNA mismatch repair. May act as a 'molecular matchmaker', a protein that promotes the formation of a stable complex between two or more DNA-binding proteins in an ATP-dependent manner without itself being part of a final effector complex. This Azotobacter vinelandii (strain DJ / ATCC BAA-1303) protein is DNA mismatch repair protein MutL.